The sequence spans 61 residues: Statherin (61 aa).

Positions 1 to 19 are cleaved as a signal peptide; it reads MXFLXFXLXLLXMXXMXXX. The segment at 20–25 is hydroxyapatite-binding; inhibits crystal growth; that stretch reads DSSEEK. A phosphoserine mark is found at Ser21 and Ser22. The segment at 37–61 is disordered; that stretch reads RYGPYQPFAPQPLYPQPYQPYQPQY. The segment at 37–61 is hydrophobic; inhibits precipitation of calcium phosphate salts; sequence RYGPYQPFAPQPLYPQPYQPYQPQY. Residues 43–61 show a composition bias toward pro residues; that stretch reads PFAPQPLYPQPYQPYQPQY.

Belongs to the histatin/statherin family. As to expression, secreted by parotid and submandibular glands.

The protein resides in the secreted. Salivary protein that stabilizes saliva supersaturated with calcium salts by inhibiting the precipitation of calcium phosphate salts. It also modulates hydroxyapatite crystal formation on the tooth surface. The sequence is that of Statherin (STATH) from Macaca fascicularis (Crab-eating macaque).